We begin with the raw amino-acid sequence, 563 residues long: Arginine--tRNA ligase (563 aa).

Residues 121–131 (PNIAKPFSIGH) carry the 'HIGH' region motif.

This sequence belongs to the class-I aminoacyl-tRNA synthetase family. Monomer.

It is found in the cytoplasm. The enzyme catalyses tRNA(Arg) + L-arginine + ATP = L-arginyl-tRNA(Arg) + AMP + diphosphate. The polypeptide is Arginine--tRNA ligase (argS) (Streptococcus pneumoniae serotype 4 (strain ATCC BAA-334 / TIGR4)).